A 196-amino-acid chain; its full sequence is Putative lipopolysaccharide biosynthesis O-acetyl transferase WbbJ (196 aa).

This sequence belongs to the transferase hexapeptide repeat family.

It participates in bacterial outer membrane biogenesis; lipopolysaccharide biosynthesis. Functionally, putative O-acetyltransferase that transfers an O-acetyl group to the O antigen. The protein is Putative lipopolysaccharide biosynthesis O-acetyl transferase WbbJ (wbbJ) of Escherichia coli (strain K12).